Consider the following 242-residue polypeptide: uncharacterized protein (242 aa).

This sequence belongs to the IIV-6 415R family.

This is an uncharacterized protein from Invertebrate iridescent virus 6 (IIV-6).